The sequence spans 191 residues: Adenylate kinase (191 aa).

10–15 (GAGKGT) contacts ATP. Residues 30 to 59 (STGDMLRAARTSGTEMGNLVAGVMDRGELV) form an NMP region. AMP is bound by residues Thr-31, Arg-36, 57–59 (ELV), 83–86 (GFPR), and Gln-90. An LID region spans residues 124 to 140 (NRAKEAAAAGQPVRADD). Residue Arg-125 participates in ATP binding. AMP contacts are provided by Arg-137 and Arg-148. Position 176 (Gly-176) interacts with ATP.

This sequence belongs to the adenylate kinase family. Monomer.

The protein localises to the cytoplasm. It catalyses the reaction AMP + ATP = 2 ADP. It participates in purine metabolism; AMP biosynthesis via salvage pathway; AMP from ADP: step 1/1. Functionally, catalyzes the reversible transfer of the terminal phosphate group between ATP and AMP. Plays an important role in cellular energy homeostasis and in adenine nucleotide metabolism. The polypeptide is Adenylate kinase (Jannaschia sp. (strain CCS1)).